Reading from the N-terminus, the 193-residue chain is Recombination protein RecR (193 aa).

A C4-type zinc finger spans residues cysteine 61–cysteine 76. A Toprim domain is found at serine 84–proline 170.

This sequence belongs to the RecR family.

May play a role in DNA repair. It seems to be involved in an RecBC-independent recombinational process of DNA repair. It may act with RecF and RecO. The protein is Recombination protein RecR of Helicobacter pylori (strain P12).